Reading from the N-terminus, the 66-residue chain is Ribosome biogenesis protein Nop10 (66 aa).

It belongs to the NOP10 family.

In terms of biological role, involved in ribosome biogenesis; more specifically in 18S rRNA pseudouridylation and in cleavage of pre-rRNA. In Desulfurococcus amylolyticus (strain DSM 18924 / JCM 16383 / VKM B-2413 / 1221n) (Desulfurococcus kamchatkensis), this protein is Ribosome biogenesis protein Nop10.